Consider the following 198-residue polypeptide: uncharacterized protein (198 aa).

4 helical membrane-spanning segments follow: residues 20–40 (VIVGVVLGLAGTGALIGGLWA), 70–90 (FFVAPCLMLGLLTVLAVTASV), 107–127 (LAIGLMICAATAAAVGALLVW), and 164–184 (VAATVLWPAGIAALVYAVLAA).

The protein to M.tuberculosis Rv1591.

The protein resides in the cell membrane. This is an uncharacterized protein from Mycobacterium leprae (strain TN).